Consider the following 1681-residue polypeptide: Probable clathrin heavy chain 1 (1681 aa).

7 WD40-like repeat regions span residues 22-65 (NITF…RPIS), 66-105 (ADSV…NVED), 106-147 (VVYW…QSLA), 148-193 (GTQI…QPIE), 194-255 (GHAA…ADTA), 256-299 (GDFP…ISTD), and 300-328 (TVFV…VSID). 7 CHCR repeats span residues 539–685 (SENG…QVVV), 688–830 (ASKY…SEDA), 835–974 (IINT…QLID), 981–1126 (LSET…VKEA), 1130–1271 (FIKA…FRLA), 1276–1422 (LHIV…LLLN), and 1425–1568 (LTVL…YDCF). Residues 1616–1628 (ERSEHERKEEKAE) are compositionally biased toward basic and acidic residues. The interval 1616-1635 (ERSEHERKEEKAEQQQNNGM) is disordered.

This sequence belongs to the clathrin heavy chain family. Clathrin triskelions, composed of 3 heavy chains and 3 light chains, are the basic subunits of the clathrin coat. May interact with beta arrestin arr-1.

It localises to the cytoplasmic vesicle membrane. Its subcellular location is the membrane. It is found in the coated pit. In terms of biological role, clathrin is the major protein of the polyhedral coat of coated pits and vesicles. May play a role in yolk protein clatherin-mediated endocytosis by oocytes during oogenesis. This is Probable clathrin heavy chain 1 (chc-1) from Caenorhabditis elegans.